A 94-amino-acid polypeptide reads, in one-letter code: Cell division topological specificity factor (94 aa).

The protein belongs to the MinE family.

Prevents the cell division inhibition by proteins MinC and MinD at internal division sites while permitting inhibition at polar sites. This ensures cell division at the proper site by restricting the formation of a division septum at the midpoint of the long axis of the cell. The polypeptide is Cell division topological specificity factor (Hamiltonella defensa subsp. Acyrthosiphon pisum (strain 5AT)).